A 909-amino-acid chain; its full sequence is MERAMEQLNRLTRSLRRARTVELPEDNETAVYTLMPMVMADQHRSVSELLSNSKFDVNYAFGRVKRSLLHIAANCGSVECLVLLLKKGANPNYQDISGCTPLHLAARNGQKKCMSKLLEYSADVNICNNEGLTAIHWLAVNGRTELLHDLVQHVTDVDVEDAMGQTALHVACQNGHKTTVQCLLDSGADINRPNVSGATPLYFACSHGQRDTAQILLLRGAKYLPDKNGVTPLDLCVQGGYGQTCEVLIQYHPRLFQTIVQMTQNEDLRENMLRQVLQHLSQQSESQYLKILTGLAEVATTNGHKLLSLSSNYDAQMKSLLRIVRIFCHVFRIGPSSPSNGIDMGYNGNKTPRSQVFKPLELLWHSLDEWLVLIATELMKNKEDSTDITSILLKQKGQDQEAPSLSAFEPPGPGSYESLPPGPGDSKPEVLAGEQEASADCQDVISVTANRLSAVIQAFYMCCSCQMPPGMTSPRFIEFVCKHDEVLKCFVNRNPKIIFDHFHFLLECPELMSRFMHIIKAQPFKDRCEWFYEHLHSGQPDSDMVHRPVSENDILLVHRDSIFRSSCEIVSKANCAKLKQGIAVRFHGEEGMGQGVVREWFDILSNEIVNPDYALFTQSADGTTFQPNSNSYVNPDHLNYFRFAGQILGLALNHRQLVNIYFTRSFYKHILGIPVNYQDVASIDPEYAKNLQWILDNDISDLGLELTFSVETDVFGAMEEVPLKPGGGSILVTQNNKAEYVQLVTELRMTRAIQPQINAFLQGFHMFIPPSLIQLFDEYELELLLSGMPEIDVNDWIKNTEYTSGYEREDPVIQWFWEVVEDITQEERVLLLQFVTGSSRVPHGGFANIMGGSGLQNFTIAAVPYTPNLLPTSSTCINMLKLPEYPSKEILKDRLLVALHCGSYGYTMA.

The segment at 1–21 is N-terminal helix important for homodimerization; that stretch reads MERAMEQLNRLTRSLRRARTV. 7 ANK repeats span residues 23 to 55, 64 to 93, 97 to 126, 130 to 159, 163 to 192, 196 to 226, and 228 to 253; these read LPED…NSKF, VKRS…NPNY, SGCT…DVNI, EGLT…DVDV, MGQT…DINR, SGAT…YLPD, and NGVT…QYHP. Positions 398 to 433 are disordered; sequence QDQEAPSLSAFEPPGPGSYESLPPGPGDSKPEVLAG. The 336-residue stretch at 574-909 folds into the HECT domain; the sequence is NCAKLKQGIA…HCGSYGYTMA (336 aa). The active-site Glycyl thioester intermediate is Cys876.

In terms of assembly, homodimer. The homodimer is autoinhibited and stabilized by its N-terminal helix. Interacts with RAB1 (RAB1A, RAB1B or RAB1C), RAB4 (RAB4A or RAB4B) and RAB11 (RAB11A or RAB11B); in a GTP-dependent manner. Interacts with the 26S proteasomal complex through the 20S core proteasomal subunit. Interacts with RARB. Autoubiquitinated.

It is found in the golgi apparatus. The protein resides in the golgi stack membrane. Its subcellular location is the cytoplasm. The protein localises to the endoplasmic reticulum. It carries out the reaction S-ubiquitinyl-[E2 ubiquitin-conjugating enzyme]-L-cysteine + [acceptor protein]-L-lysine = [E2 ubiquitin-conjugating enzyme]-L-cysteine + N(6)-ubiquitinyl-[acceptor protein]-L-lysine.. It participates in protein modification; protein ubiquitination. Sterically autoinhibited in its dimeric state. In terms of biological role, E3 ubiquitin-protein ligase involved in Golgi membrane fusion and regulation of small GTPases. Acts as a regulator of Golgi membrane dynamics during the cell cycle: recruited to Golgi membrane by Rab proteins and regulates postmitotic Golgi membrane fusion. Acts by mediating ubiquitination during mitotic Golgi disassembly, ubiquitination serving as a signal for Golgi reassembly later, after cell division. Specifically binds GTP-bound RAC1, mediating ubiquitination and subsequent degradation of active RAC1, thereby playing a role in host defense against pathogens. May also act as a transcription regulator via its interaction with RARB. The polypeptide is E3 ubiquitin-protein ligase HACE1 (Hace1) (Mus musculus (Mouse)).